The sequence spans 375 residues: Growth/differentiation factor 8 (375 aa).

Positions 1-18 are cleaved as a signal peptide; it reads MQKLQISVYIYLFMLIVA. The propeptide occupies 19–266; it reads GPVDLNENSE…VTDTPKRSRR (248 aa). N-linked (GlcNAc...) asparagine glycans are attached at residues Asn47 and Asn71. Disulfide bonds link Cys272-Cys282, Cys281-Cys340, Cys309-Cys372, and Cys313-Cys374.

The protein belongs to the TGF-beta family. As to quaternary structure, homodimer; disulfide-linked. Interacts with WFIKKN2, leading to inhibit its activity. Interacts with FSTL3. Synthesized as large precursor molecule that undergoes proteolytic cleavage to generate an N-terminal propeptide and a disulfide linked C-terminal dimer, which is the biologically active molecule. The circulating form consists of a latent complex of the C-terminal dimer and other proteins, including its propeptide, which maintain the C-terminal dimer in a latent, inactive state. Ligand activation requires additional cleavage of the prodomain by a tolloid-like metalloproteinase.

Its subcellular location is the secreted. Its function is as follows. Acts specifically as a negative regulator of skeletal muscle growth. The sequence is that of Growth/differentiation factor 8 (MSTN) from Bos gaurus (Seladang).